Reading from the N-terminus, the 1753-residue chain is Negative regulator of sporulation PMD1 (1753 aa).

2 Kelch repeats span residues 143 to 198 (NIYI…VLNE) and 206 to 253 (KLII…KILV). Thr-298 carries the post-translational modification Phosphothreonine. The span at 651–664 (TTKFGNSSQSSNGS) shows a compositional bias: polar residues. 2 disordered regions span residues 651–753 (TTKF…TTCS) and 771–807 (LGLSEQSGRSTRASSVSPPPVYKKSTNDGNDSNCTLS). Residues 670–683 (SKNGNSKSNSNTSL) show a composition bias toward low complexity. Polar residues-rich tracts occupy residues 690–699 (DFTSSTSSPK), 740–753 (TGTSNKRPISTTCS), 774–783 (SEQSGRSTRA), and 797–807 (NDGNDSNCTLS). Phosphoserine is present on Ser-838. 3 disordered regions span residues 875–915 (IASP…LGSS), 938–957 (PLEPLPPVPKAPSRRSSSLA), and 962–988 (FGRDSPVASRRSSHSTRKSSSSDARRI). Low complexity predominate over residues 880–900 (QSRQTSFASTASTASVVSSTS). The segment covering 938-947 (PLEPLPPVPK) has biased composition (pro residues). The segment covering 979–988 (KSSSSDARRI) has biased composition (low complexity). 3 positions are modified to phosphoserine: Ser-1289, Ser-1307, and Ser-1356. Disordered regions lie at residues 1312–1467 (SPAT…DLDS), 1604–1686 (PIFA…NKRF), and 1706–1753 (SAVN…GKRR). The segment covering 1344 to 1379 (VSRQQNFPRRSSSFTETVPTEPTRYNYQNLDSSKSN) has biased composition (polar residues). The span at 1399–1430 (NFDKYKVETLQKRNSNDGKDLDRTNDPLKNRG) shows a compositional bias: basic and acidic residues. A compositionally biased stretch (polar residues) spans 1653–1677 (IKFSQAPSTQISPRTSVTDFTASQQ). Ser-1664 is subject to Phosphoserine. Residues 1711–1723 (GRKESEGHCEDRS) are compositionally biased toward basic and acidic residues.

The protein localises to the cytoplasm. Negatively regulates early sporulation-specific genes. Seems to exert its function by positively regulating the Ras/cAMP pathway. Required for growth under alkaline conditions. Acts synergetically with MDS3. The polypeptide is Negative regulator of sporulation PMD1 (PMD1) (Saccharomyces cerevisiae (strain ATCC 204508 / S288c) (Baker's yeast)).